The following is a 924-amino-acid chain: Protein translocase subunit SecA (924 aa).

Residues Gln87, 105-109 (GEGKT), and Asp517 each bind ATP. Positions 886–906 (VPAADRDPNDPSTWGKVGRNE) are disordered. 4 residues coordinate Zn(2+): Cys908, Cys910, Cys919, and His920.

Belongs to the SecA family. Monomer and homodimer. Part of the essential Sec protein translocation apparatus which comprises SecA, SecYEG and auxiliary proteins SecDF-YajC and YidC. It depends on Zn(2+) as a cofactor.

It is found in the cell inner membrane. Its subcellular location is the cytoplasm. It carries out the reaction ATP + H2O + cellular proteinSide 1 = ADP + phosphate + cellular proteinSide 2.. Functionally, part of the Sec protein translocase complex. Interacts with the SecYEG preprotein conducting channel. Has a central role in coupling the hydrolysis of ATP to the transfer of proteins into and across the cell membrane, serving both as a receptor for the preprotein-SecB complex and as an ATP-driven molecular motor driving the stepwise translocation of polypeptide chains across the membrane. In Azorhizobium caulinodans (strain ATCC 43989 / DSM 5975 / JCM 20966 / LMG 6465 / NBRC 14845 / NCIMB 13405 / ORS 571), this protein is Protein translocase subunit SecA.